The chain runs to 932 residues: Beta-mannosidase A (932 aa).

Positions 1–21 (MRIREQTILALLSPGLPPVTG) are cleaved as a signal peptide. N-linked (GlcNAc...) asparagine glycosylation is found at N40, N248, N283, N317, and N348. The active-site Proton donor is the E480. N538, N609, N632, N659, N739, N762, and N791 each carry an N-linked (GlcNAc...) asparagine glycan.

Belongs to the glycosyl hydrolase 2 family. Beta-mannosidase A subfamily. Homodimer.

The protein localises to the secreted. It carries out the reaction Hydrolysis of terminal, non-reducing beta-D-mannose residues in beta-D-mannosides.. The protein operates within glycan metabolism; N-glycan degradation. Exoglycosidase that cleaves the single beta-linked mannose residue from the non-reducing end of beta-mannosidic oligosaccharides of various complexity and length. Involved in the degradation of polymeric mannan and galactomannan. This chain is Beta-mannosidase A (mndA), found in Aspergillus clavatus (strain ATCC 1007 / CBS 513.65 / DSM 816 / NCTC 3887 / NRRL 1 / QM 1276 / 107).